The primary structure comprises 161 residues: Arachidonate 5-lipoxygenase-activating protein (161 aa).

Over methionine 1 to asparagine 8 the chain is Lumenal. A helical membrane pass occupies residues valine 9 to valine 30. The Cytoplasmic segment spans residues glutamate 31–arginine 52. The chain crosses the membrane as a helical span at residues valine 53 to leucine 77. At cysteine 78–glutamine 80 the chain is on the lumenal side. Residues valine 81–leucine 102 traverse the membrane as a helical segment. Topologically, residues glycine 103–glutamine 107 are cytoplasmic. Residues serine 108 to glycine 115 lie within the membrane without spanning it. The chain crosses the membrane as a helical span at residues lysine 116–alanine 128. Residues glycine 129 to proline 161 are Lumenal-facing.

Belongs to the MAPEG family. As to quaternary structure, homotrimer. Interacts with LTC4S and ALOX5.

It localises to the nucleus membrane. Its subcellular location is the endoplasmic reticulum membrane. Its function is as follows. Required for leukotriene biosynthesis by ALOX5 (5-lipoxygenase). Anchors ALOX5 to the membrane. Binds arachidonic acid, and could play an essential role in the transfer of arachidonic acid to ALOX5. Binds to MK-886, a compound that blocks the biosynthesis of leukotrienes. This Mus musculus (Mouse) protein is Arachidonate 5-lipoxygenase-activating protein (Alox5ap).